The following is a 250-amino-acid chain: MADS-box protein J2 (250 aa).

An MADS-box domain is found at 1 to 61 (MGRGRVELKR…GKLYEFSSAS (61 aa)). One can recognise a K-box domain in the interval 87-177 (TQMNYNEYVR…KNKLEESAAR (91 aa)).

The protein localises to the nucleus. Its function is as follows. MADS-box transcription factor that acts redundantly with EJ2 to control meristem maturation and inflorescence architecture. This is MADS-box protein J2 from Solanum lycopersicum (Tomato).